A 79-amino-acid chain; its full sequence is Sec-independent protein translocase protein TatA (79 aa).

The helical transmembrane segment at 1 to 21 (MGSLSIWHWLIVLLIVALVFG) threads the bilayer. The interval 46-79 (ADAPAAEAQQRELPRNGAVDVEAKEKTPRSGDYR) is disordered. Residues 66-79 (VEAKEKTPRSGDYR) are compositionally biased toward basic and acidic residues.

It belongs to the TatA/E family. As to quaternary structure, the Tat system comprises two distinct complexes: a TatABC complex, containing multiple copies of TatA, TatB and TatC subunits, and a separate TatA complex, containing only TatA subunits. Substrates initially bind to the TatABC complex, which probably triggers association of the separate TatA complex to form the active translocon.

The protein resides in the cell inner membrane. Its function is as follows. Part of the twin-arginine translocation (Tat) system that transports large folded proteins containing a characteristic twin-arginine motif in their signal peptide across membranes. TatA could form the protein-conducting channel of the Tat system. The protein is Sec-independent protein translocase protein TatA of Paraburkholderia phytofirmans (strain DSM 17436 / LMG 22146 / PsJN) (Burkholderia phytofirmans).